A 143-amino-acid polypeptide reads, in one-letter code: Hemoglobin subunit alpha-1 (143 aa).

N-acetylserine is present on Ser2. Residues 2-143 (SLSTKDKETV…VSLALAEKYR (142 aa)) form the Globin domain. Residue His60 coordinates O2. Position 89 (His89) interacts with heme b.

The protein belongs to the globin family. As to quaternary structure, hb1 is a heterotetramer of two alpha-1 chains and two beta-1 chains. In terms of tissue distribution, red blood cells.

Functionally, involved in oxygen transport from gills to the various peripheral tissues. The chain is Hemoglobin subunit alpha-1 from Liparis tunicatus (Kelp snailfish).